We begin with the raw amino-acid sequence, 352 residues long: Ketoisovalerate oxidoreductase subunit VorB (352 aa).

In terms of assembly, heterotrimer of the VorA, VorB and VorC subunits.

It carries out the reaction 3-methyl-2-oxobutanoate + 2 oxidized [2Fe-2S]-[ferredoxin] + CoA = 2-methylpropanoyl-CoA + 2 reduced [2Fe-2S]-[ferredoxin] + CO2 + H(+). This chain is Ketoisovalerate oxidoreductase subunit VorB (vorB), found in Methanothermobacter marburgensis (strain ATCC BAA-927 / DSM 2133 / JCM 14651 / NBRC 100331 / OCM 82 / Marburg) (Methanobacterium thermoautotrophicum).